The sequence spans 541 residues: MAKTIAYDEEARRGLERGLNALADAVKVTLGPKGRNVVLEKKWGAPTITNDGVSIAKEIELEDPYEKIGAELVKEVAKKTDDVAGDGTTTATVLAQALVREGLRNVAAGANPLGLKRGIEKAVEKVTETLLKSAKEVETKEQIAATAGISAGDQSIGDLIAEAMDKVGNEGVITVEESNTFGLQLELTEGMRFDKGYISGYFVTDAERQEAVLEDPYILLVSSKISTVKDLLPLLEKVIQSGKPLLIIAEDVEGEALSTLVVNKIRGTFKSVAVKAPGFGDRRKAMLQDMAILTGGQVISEEVGLSLETADISLLGQARKVVITKDETTIVEGAGDAEAIQGRVAQIRAEIENSDSDYDREKLQERLAKLAGGVAVIKAGAATEVELKERKHRIEDAVRNAKAAVEEGIVAGGGVALLQAAPSLEELNLTGDEATGANIVRVALEAPLKQIAFNGGLEPGVVAEKVRNSAAGTGLNAATGEYEDLLAAGVADPVKVTRSALQNAASIAALFLTTEAVVADKPEKSAAPAGDPTGGMGGMDF.

ATP-binding positions include 29-32, 86-90, Gly-413, 476-478, and Asp-492; these read TLGP, DGTTT, and NAA.

The protein belongs to the chaperonin (HSP60) family. As to quaternary structure, forms a cylinder of 14 subunits composed of two heptameric rings stacked back-to-back. Interacts with the co-chaperonin GroES.

It localises to the secreted. It is found in the capsule. The protein localises to the cell surface. Its subcellular location is the cell wall. It carries out the reaction ATP + H2O + a folded polypeptide = ADP + phosphate + an unfolded polypeptide.. Its function is as follows. Together with its co-chaperonin GroES, plays an essential role in assisting protein folding. The GroEL-GroES system forms a nano-cage that allows encapsulation of the non-native substrate proteins and provides a physical environment optimized to promote and accelerate protein folding. The sequence is that of Chaperonin GroEL 2 from Mycobacterium sp. (strain KMS).